The sequence spans 59 residues: Small, acid-soluble spore protein C1 (59 aa).

The protein belongs to the alpha/beta-type SASP family. SASP are degraded in the first minutes of spore germination and provide amino acids for both new protein synthesis and metabolism.

SASP are bound to spore DNA. They are double-stranded DNA-binding proteins that cause DNA to change to an a-like conformation. They protect the DNA backbone from chemical and enzymatic cleavage and are thus involved in dormant spore's high resistance to UV light. In Clostridium perfringens (strain 13 / Type A), this protein is Small, acid-soluble spore protein C1 (sspC1).